Reading from the N-terminus, the 252-residue chain is Trans-aconitate 2-methyltransferase (252 aa).

The protein belongs to the methyltransferase superfamily. Tam family.

The protein resides in the cytoplasm. It catalyses the reaction trans-aconitate + S-adenosyl-L-methionine = (E)-3-(methoxycarbonyl)pent-2-enedioate + S-adenosyl-L-homocysteine. Catalyzes the S-adenosylmethionine monomethyl esterification of trans-aconitate. In Escherichia coli O7:K1 (strain IAI39 / ExPEC), this protein is Trans-aconitate 2-methyltransferase.